We begin with the raw amino-acid sequence, 480 residues long: Ochratoxinase (480 aa).

The Zn(2+) site is built by His-111, His-113, Lys-246, His-287, and His-307. The active site involves Lys-246. Asp-378 is an active-site residue.

This sequence belongs to the metallo-dependent hydrolases superfamily. Ochratoxinase amidase 2 family. In terms of assembly, homooctamer. Zn(2+) serves as cofactor.

It is found in the secreted. It carries out the reaction ochratoxin A + H2O = ochratoxin alpha + L-phenylalanine. With respect to regulation, the Zn(2+)-specific chelator 1,10-phenanthroline inhibits the enzyme activity. Functionally, carboxypeptidase that catalyzes the release of a C-terminal amino acid with specific catalytic activity for aromatic amino acids such as phenylalanine. Is able to degrade ochratoxin A, one of the five major mycotoxins most harmful to humans and animals that is produced by Aspergillus and Penicillium species and occurs in a wide range of agricultural products. This Aspergillus niger (strain ATCC MYA-4892 / CBS 513.88 / FGSC A1513) protein is Ochratoxinase.